A 240-amino-acid polypeptide reads, in one-letter code: Biosynthetic peptidoglycan transglycosylase (240 aa).

Residues 27 to 47 (VVLLFFFAVFALLLIFRFVPI) traverse the membrane as a helical segment.

Belongs to the glycosyltransferase 51 family.

Its subcellular location is the cell inner membrane. The enzyme catalyses [GlcNAc-(1-&gt;4)-Mur2Ac(oyl-L-Ala-gamma-D-Glu-L-Lys-D-Ala-D-Ala)](n)-di-trans,octa-cis-undecaprenyl diphosphate + beta-D-GlcNAc-(1-&gt;4)-Mur2Ac(oyl-L-Ala-gamma-D-Glu-L-Lys-D-Ala-D-Ala)-di-trans,octa-cis-undecaprenyl diphosphate = [GlcNAc-(1-&gt;4)-Mur2Ac(oyl-L-Ala-gamma-D-Glu-L-Lys-D-Ala-D-Ala)](n+1)-di-trans,octa-cis-undecaprenyl diphosphate + di-trans,octa-cis-undecaprenyl diphosphate + H(+). It participates in cell wall biogenesis; peptidoglycan biosynthesis. Functionally, peptidoglycan polymerase that catalyzes glycan chain elongation from lipid-linked precursors. The protein is Biosynthetic peptidoglycan transglycosylase of Haemophilus influenzae (strain PittEE).